The sequence spans 169 residues: Putative cysteine protease YraA (169 aa).

In terms of domain architecture, PfpI endopeptidase spans 3-169 (KKIAVLVTDQ…FNRESLNLLK (167 aa)). The Nucleophile role is filled by cysteine 103. Histidine 104 is an active-site residue.

It belongs to the peptidase C56 family.

Functionally, functions in the protection against aldehyde-stress, possibly by degrading damaged proteins. This Bacillus subtilis (strain 168) protein is Putative cysteine protease YraA (yraA).